Here is a 211-residue protein sequence, read N- to C-terminus: Adenylate kinase (211 aa).

An ATP-binding site is contributed by 10–15; the sequence is GSGKGT. Residues 30–59 are NMP; it reads STGDLFRENILNSTALGQEIKKIVERGELV. Residues T31, R36, 57-59, 85-88, and Q92 contribute to the AMP site; these read ELV and GFPR. An LID region spans residues 121 to 158; that stretch reads GRRICKSCNNIFNIYTLTTKKNGICDVCGGDLYQREDD. R122 serves as a coordination point for ATP. C125 and C128 together coordinate Zn(2+). Residue 131 to 132 coordinates ATP; that stretch reads IF. Zn(2+) is bound by residues C145 and C148. 2 residues coordinate AMP: R155 and R166. Position 194 (V194) interacts with ATP.

This sequence belongs to the adenylate kinase family. Monomer.

The protein localises to the cytoplasm. The enzyme catalyses AMP + ATP = 2 ADP. Its pathway is purine metabolism; AMP biosynthesis via salvage pathway; AMP from ADP: step 1/1. Functionally, catalyzes the reversible transfer of the terminal phosphate group between ATP and AMP. Plays an important role in cellular energy homeostasis and in adenine nucleotide metabolism. In Borreliella burgdorferi (strain ATCC 35210 / DSM 4680 / CIP 102532 / B31) (Borrelia burgdorferi), this protein is Adenylate kinase.